We begin with the raw amino-acid sequence, 238 residues long: Sugar fermentation stimulation protein homolog (238 aa).

It belongs to the SfsA family.

The protein is Sugar fermentation stimulation protein homolog of Bartonella tribocorum (strain CIP 105476 / IBS 506).